The primary structure comprises 185 residues: MALDKLLEQEAQSEIERIRAEARDRSQMIVAQAQERAQALIESRQRALETQRQAGIVRARSAADLDLNAARLTASESGMSQVYELVNQQITEITRVPEYRDILGRLIYQAREVITDAEAVEVNPAEAALARELVHDIAVRENPAIQGGVRVVARGGKSGITNTLAGRLERVRGELAPQVSRLLAE.

The protein belongs to the V-ATPase E subunit family.

Produces ATP from ADP in the presence of a proton gradient across the membrane. This Deinococcus deserti (strain DSM 17065 / CIP 109153 / LMG 22923 / VCD115) protein is V-type proton ATPase subunit E.